Reading from the N-terminus, the 513-residue chain is Lysine--tRNA ligase (513 aa).

Residues Glu-423 and Glu-430 each contribute to the Mg(2+) site.

Belongs to the class-II aminoacyl-tRNA synthetase family. In terms of assembly, homodimer. Requires Mg(2+) as cofactor.

It localises to the cytoplasm. The catalysed reaction is tRNA(Lys) + L-lysine + ATP = L-lysyl-tRNA(Lys) + AMP + diphosphate. The polypeptide is Lysine--tRNA ligase (Anaeromyxobacter dehalogenans (strain 2CP-1 / ATCC BAA-258)).